The chain runs to 231 residues: Large ribosomal subunit protein uL1 (231 aa).

This sequence belongs to the universal ribosomal protein uL1 family. As to quaternary structure, part of the 50S ribosomal subunit.

Binds directly to 23S rRNA. The L1 stalk is quite mobile in the ribosome, and is involved in E site tRNA release. Functionally, protein L1 is also a translational repressor protein, it controls the translation of the L11 operon by binding to its mRNA. In Pseudomonas syringae pv. syringae (strain B728a), this protein is Large ribosomal subunit protein uL1.